We begin with the raw amino-acid sequence, 897 residues long: Protein translocase subunit SecA (897 aa).

ATP is bound by residues Q87, 105–109 (GEGKT), and D512. The interval 846–897 (EEEQQKQARKKMVFNLVDEDETSEPSKSKKLAGRNEPCPCGSGKKYKKCCGK) is disordered. Positions 883, 885, 894, and 895 each coordinate Zn(2+).

This sequence belongs to the SecA family. As to quaternary structure, monomer and homodimer. Part of the essential Sec protein translocation apparatus which comprises SecA, SecYEG and auxiliary proteins SecDF-YajC and YidC. It depends on Zn(2+) as a cofactor.

It localises to the cell inner membrane. The protein resides in the cytoplasm. The catalysed reaction is ATP + H2O + cellular proteinSide 1 = ADP + phosphate + cellular proteinSide 2.. Functionally, part of the Sec protein translocase complex. Interacts with the SecYEG preprotein conducting channel. Has a central role in coupling the hydrolysis of ATP to the transfer of proteins into and across the cell membrane, serving as an ATP-driven molecular motor driving the stepwise translocation of polypeptide chains across the membrane. The polypeptide is Protein translocase subunit SecA (Geobacter sulfurreducens (strain ATCC 51573 / DSM 12127 / PCA)).